The sequence spans 670 residues: MAKSSFFNKHLLLSLLILLQSCLLSSSSSTDSETLLNFKLTADSTGKLNSWNTTTNPCQWTGVSCNRNRVTRLVLEDINLTGSISSLTSLTSLRVLSLKHNNLSGPIPNLSNLTALKLLFLSNNQFSGNFPTSITSLTRLYRLDLSFNNFSGQIPPDLTDLTHLLTLRLESNRFSGQIPNINLSDLQDFNVSGNNFNGQIPNSLSQFPESVFTQNPSLCGAPLLKCTKLSSDPTKPGRPDEAKASPLNKPETVPSSPTSIHGGDKSNNTSRISTISLIAIILGDFIILSFVSLLLYYCFWRQYAVNKKKHSKILEGEKIVYSSNPYPTSTQNNNNQNQQVGDKGKMVFFEGTRRFELEDLLRASAEMLGKGGFGTAYKAVLEDGNEVAVKRLKDAVTVAGKKEFEQQMEVLGRLRHTNLVSLKAYYFAREEKLLVYDYMPNGSLFWLLHGNRGPGRTPLDWTTRLKIAAGAARGLAFIHGSCKTLKLTHGDIKSTNVLLDRSGNARVSDFGLSIFAPSQTVAKSNGYRAPELIDGRKHTQKSDVYSFGVLLLEILTGKCPNMVETGHSGGAVDLPRWVQSVVREEWTAEVFDLELMRYKDIEEEMVGLLQIAMACTAVAADHRPKMGHVVKLIEDIRGGGSEASPCNDGINSAVDSPCLSEDTCGGTTSQ.

Positions 1 to 29 (MAKSSFFNKHLLLSLLILLQSCLLSSSSS) are cleaved as a signal peptide. Topologically, residues 30–274 (TDSETLLNFK…KSNNTSRIST (245 aa)) are extracellular. 5 N-linked (GlcNAc...) asparagine glycosylation sites follow: N52, N79, N102, N109, and N112. LRR repeat units follow at residues 69–91 (RVTRLVLEDINLTGSISSLTSLT), 92–114 (SLRVLSLKHNNLSGPIPNLSNLT), 115–137 (ALKLLFLSNNQFSGNFPTSITSL), 139–162 (RLYRLDLSFNNFSGQIPPDLTDLT), 163–185 (HLLTLRLESNRFSGQIPNINLSD), and 186–207 (LQDFNVSGNNFNGQIPNSLSQF). N-linked (GlcNAc...) asparagine glycans are attached at residues N149, N182, and N190. The disordered stretch occupies residues 230-266 (SSDPTKPGRPDEAKASPLNKPETVPSSPTSIHGGDKS). The segment covering 253–266 (VPSSPTSIHGGDKS) has biased composition (polar residues). A glycan (N-linked (GlcNAc...) asparagine) is linked at N268. A helical transmembrane segment spans residues 275-295 (ISLIAIILGDFIILSFVSLLL). The Cytoplasmic segment spans residues 296–670 (YYCFWRQYAV…EDTCGGTTSQ (375 aa)). Residues 362–636 (RASAEMLGKG…GHVVKLIEDI (275 aa)) form the Protein kinase domain. S364 is modified (phosphoserine). Residues 368–376 (LGKGGFGTA) and K390 contribute to the ATP site. S443 bears the Phosphoserine mark. Residue T463 is modified to Phosphothreonine. The Proton acceptor role is filled by D491. The residue at position 616 (T616) is a Phosphothreonine.

Belongs to the protein kinase superfamily. Ser/Thr protein kinase family.

The protein localises to the cell membrane. The enzyme catalyses L-seryl-[protein] + ATP = O-phospho-L-seryl-[protein] + ADP + H(+). It carries out the reaction L-threonyl-[protein] + ATP = O-phospho-L-threonyl-[protein] + ADP + H(+). The chain is Probable leucine-rich repeat receptor-like protein kinase At1g68400 from Arabidopsis thaliana (Mouse-ear cress).